We begin with the raw amino-acid sequence, 449 residues long: Aspartyl protease AED3 (449 aa).

Positions 1-23 (MASSSLHFFFFLTLLLPFTFTTA) are cleaved as a signal peptide. The Peptidase A1 domain maps to 104 to 444 (YVVRAKLGTP…DVPNSRIGIA (341 aa)). Aspartate 122 is an active-site residue. An intrachain disulfide couples cysteine 132 to cysteine 138. N-linked (GlcNAc...) asparagine glycosylation is found at asparagine 140, asparagine 148, asparagine 184, asparagine 211, and asparagine 297. Aspartate 328 is a catalytic residue. Asparagine 353 is a glycosylation site (N-linked (GlcNAc...) asparagine). The cysteines at positions 366 and 405 are disulfide-linked.

It belongs to the peptidase A1 family.

The protein localises to the secreted. The protein resides in the extracellular space. Its subcellular location is the apoplast. The sequence is that of Aspartyl protease AED3 from Arabidopsis thaliana (Mouse-ear cress).